Consider the following 394-residue polypeptide: Elongation factor Tu (394 aa).

One can recognise a tr-type G domain in the interval 10 to 204 (KPHVNVGTIG…FLDSYIPEPE (195 aa)). The segment at 19–26 (GHVDHGKT) is G1. 19-26 (GHVDHGKT) is a GTP binding site. Mg(2+) is bound at residue Thr-26. The interval 60-64 (GITIN) is G2. The G3 stretch occupies residues 81–84 (DCPG). GTP contacts are provided by residues 81-85 (DCPGH) and 136-139 (NKCD). Positions 136 to 139 (NKCD) are G4. Residues 174 to 176 (SAL) form a G5 region.

This sequence belongs to the TRAFAC class translation factor GTPase superfamily. Classic translation factor GTPase family. EF-Tu/EF-1A subfamily. In terms of assembly, monomer.

The protein resides in the cytoplasm. It catalyses the reaction GTP + H2O = GDP + phosphate + H(+). Its function is as follows. GTP hydrolase that promotes the GTP-dependent binding of aminoacyl-tRNA to the A-site of ribosomes during protein biosynthesis. The chain is Elongation factor Tu from Salmonella arizonae (strain ATCC BAA-731 / CDC346-86 / RSK2980).